The sequence spans 2319 residues: MGPGARGRRRRRRLMALPPPPPPMRALPLLLLLLAGLGAAAPPCLDGSPCANGGRCTHQQPSREAACLCLPGWVGERCQLEDPCHSGPCAGRGVCQSSVVAGVARFSCRCLRGFRGPDCSLPDPCFSSPCAHGAPCSVGSDGRYACACPPGYQGRNCRSDIDECRAGASCRHGGTCINTPGSFHCLCPLGYTGLLCENPIVPCAPSPCRNGGTCRQSSDVTYDCACLPGFEGQNCEVNVDDCPGHRCLNGGTCVDGVNTYNCQCPPEWTGQFCTEDVDECQLQPNACHNGGTCFNLLGGHSCVCVNGWTGESCSQNIDDCATAVCFHGATCHDRVASFYCACPMGKTGLLCHLDDACVSNPCHEDAICDTNPVSGRAICTCPPGFTGGACDQDVDECSIGANPCEHLGRCVNTQGSFLCQCGRGYTGPRCETDVNECLSGPCRNQATCLDRIGQFTCICMAGFTGTFCEVDIDECQSSPCVNGGVCKDRVNGFSCTCPSGFSGSTCQLDVDECASTPCRNGAKCVDQPDGYECRCAEGFEGTLCERNVDDCSPDPCHHGRCVDGIASFSCACAPGYTGIRCESQVDECRSQPCRYGGKCLDLVDKYLCRCPPGTTGVNCEVNIDDCASNPCTFGVCRDGINRYDCVCQPGFTGPLCNVEINECASSPCGEGGSCVDGENGFHCLCPPGSLPPLCLPANHPCAHKPCSHGVCHDAPGGFQCVCDPGWSGPRCSQSLAPDACESQPCQAGGTCTSDGIGFHCTCAPGFQGHQCEVLSPCTPSLCEHGGHCESDPDQLTVCSCPPGWQGPRCQQDVDECAGASPCGPHGTCTNLPGSFRCICHGGYTGPFCDQDIDDCDPNPCLNGGSCQDGVGSFSCSCLSGFAGPRCARDVDECLSSPCGPGTCTDHVASFTCTCPPGYGGFHCETDLLDCSPSSCFNGGTCVDGVNSFSCLCRPGYTGTHCQYKVDPCFSRPCLHGGICNPTHSGFECTCREGFTGNQCQNPVDWCSQAPCQNGGRCVQTGAYCICPPEWSGPLCDIPSLPCTEAAAHMGVRLEQLCQAGGQCIDKDHSHYCVCPEGRMGSHCEQEVDPCTAQPCQHGGTCRGYMGGYVCECPTGYSGDSCEDDVDECASQPCQNGGSCIDLVAHYLCSCPPGTLGVLCEINEDDCGPGPSLDSGLRCLHNGTCVDLVGGFRCNCPPGYTGLHCEADINECRPGTCHAAHTRDCLQDPGGHFRCICLPGFTGPRCQTALFPCESQPCQHGGQCRPSLGRGGGLTFTCHCVQPFWGLRCERVARSCRELQCPVGIPCQQTARGPRCACPPGLSGPSCRVSRASPSGATNTSCAATPCLHGGSCLPVQSVPFFRCVCAPGWGGPRCETPSAAPEVPEEPRCPRAACQAKRGDQNCDRECNSPGCGWDGGDCSLNVDDPWRQCEALQCWRLFNNSRCDPACSSPACLYDNFDCYSGGRDRTCNPVYKKYCADHFADGRCDQGCNTEECGWDGLDCASEVPALLARGVLVLTVLLPPEELLRSSADFLQRLSAILRTSLRFRLDARGQAMVFPYHRPSPGSESRVRRELGPEVIGSVVMLEIDNRLCLKSAENDHCFPDAQSAADYLGALSAVERLDFPYPLRDVRGEPLEPPEQSVPLLPLLVAGAVFLLVIFVLGVMVARRKREHSTLWFPEGFALHKDIAAGHKGRREPVGQDALGMKNMTKGESLMGEVATDWNDSECPEAKRLKVEEPGMGAEEPVDCRQWTQHHLVAADIRVAPAMALTPPQGDADADGMDVNVRGPDGFTPLMLASFCGGALEPMPAEEDEADDTSASIISDLICQGAQLGARTDRTGETALHLAARYARADAAKRLLDAGADTNAQDHSGRTPLHTAVTADAQGVFQILIRNRSTDLDARMADGSTALILAARLAVEGMVEELIASHADVNAVDELGKSALHWAAAVNNVEATLALLKNGANKDMQDSKEETPLFLAAREGSYEAAKLLLDHFANREITDHLDRLPRDVAQERLHQDIVRLLDQPSGPRSPSGPHGLGPLLCPPGAFLPGLKAVQSGTKKSRRPPGKTGLGPQGTRGRGKKLTLACPGPLADSSVTLSPVDSLDSPRPFGGPPASPGGFPLEGPYATTATTVSLAQLGASRAGPLGRQPPGGCVLSLGLLNPVAVPLDWARLPPPAPPGPSFLLPLAPGSQLLNPATPVSPHERPPPYLAAPGHGEEYPAAGTHSSPTKARFLRVPSEHPYLTPSPESPEHWASPSPPSLSDWSDSTPSPATATSATAAGALPAQPHPISVPSLPQSQTQLGPQPEVTPKRQVMA.

Over residues 1–14 (MGPGARGRRRRRRL) the composition is skewed to basic residues. Residues 1–20 (MGPGARGRRRRRRLMALPPP) form a disordered region. The first 40 residues, 1–40 (MGPGARGRRRRRRLMALPPPPPPMRALPLLLLLLAGLGAA), serve as a signal peptide directing secretion. 3 consecutive EGF-like domains span residues 41-79 (APPC…ERCQ), 80-120 (LEDP…PDCS), and 121-158 (LPDP…RNCR). At 41–1645 (APPCLDGSPC…LEPPEQSVPL (1605 aa)) the chain is on the extracellular side. 99 disulfide bridges follow: cysteine 44-cysteine 56, cysteine 50-cysteine 67, cysteine 69-cysteine 78, cysteine 84-cysteine 95, cysteine 89-cysteine 108, cysteine 110-cysteine 119, cysteine 125-cysteine 136, cysteine 130-cysteine 146, cysteine 148-cysteine 157, cysteine 164-cysteine 176, cysteine 170-cysteine 185, cysteine 187-cysteine 196, cysteine 203-cysteine 214, cysteine 208-cysteine 224, cysteine 226-cysteine 235, cysteine 242-cysteine 253, cysteine 247-cysteine 262, cysteine 264-cysteine 273, cysteine 280-cysteine 293, cysteine 287-cysteine 302, cysteine 304-cysteine 313, cysteine 320-cysteine 331, cysteine 325-cysteine 340, cysteine 342-cysteine 351, cysteine 357-cysteine 368, cysteine 362-cysteine 379, cysteine 381-cysteine 390, cysteine 397-cysteine 410, cysteine 404-cysteine 419, cysteine 421-cysteine 430, cysteine 437-cysteine 448, cysteine 442-cysteine 457, cysteine 459-cysteine 468, cysteine 475-cysteine 486, cysteine 480-cysteine 495, cysteine 497-cysteine 506, cysteine 513-cysteine 524, cysteine 518-cysteine 533, cysteine 535-cysteine 544, cysteine 551-cysteine 561, cysteine 556-cysteine 570, cysteine 572-cysteine 581, cysteine 588-cysteine 599, cysteine 593-cysteine 608, cysteine 610-cysteine 619, cysteine 626-cysteine 636, cysteine 631-cysteine 645, cysteine 647-cysteine 656, cysteine 663-cysteine 674, cysteine 668-cysteine 683, cysteine 685-cysteine 694, cysteine 701-cysteine 711, cysteine 706-cysteine 720, cysteine 722-cysteine 731, cysteine 740-cysteine 751, cysteine 745-cysteine 760, cysteine 762-cysteine 771, cysteine 777-cysteine 788, cysteine 782-cysteine 798, cysteine 800-cysteine 809, cysteine 816-cysteine 828, cysteine 822-cysteine 837, cysteine 839-cysteine 848, cysteine 855-cysteine 866, cysteine 860-cysteine 875, cysteine 877-cysteine 886, cysteine 893-cysteine 903, cysteine 898-cysteine 912, cysteine 914-cysteine 923, cysteine 930-cysteine 941, cysteine 935-cysteine 950, cysteine 952-cysteine 961, cysteine 968-cysteine 979, cysteine 973-cysteine 988, cysteine 990-cysteine 999, cysteine 1006-cysteine 1017, cysteine 1011-cysteine 1024, cysteine 1026-cysteine 1035, cysteine 1042-cysteine 1063, cysteine 1057-cysteine 1072, cysteine 1074-cysteine 1083, cysteine 1090-cysteine 1101, cysteine 1095-cysteine 1110, cysteine 1112-cysteine 1121, cysteine 1128-cysteine 1139, cysteine 1133-cysteine 1148, cysteine 1150-cysteine 1159, cysteine 1166-cysteine 1184, cysteine 1178-cysteine 1193, cysteine 1195-cysteine 1204, cysteine 1211-cysteine 1224, cysteine 1216-cysteine 1234, cysteine 1236-cysteine 1245, cysteine 1252-cysteine 1263, cysteine 1257-cysteine 1277, cysteine 1279-cysteine 1288, cysteine 1295-cysteine 1306, cysteine 1300-cysteine 1315, and cysteine 1317-cysteine 1326. Residues 160 to 197 (DIDECRAGASCRHGGTCINTPGSFHCLCPLGYTGLLCE) enclose the EGF-like 4; calcium-binding domain. An EGF-like 5 domain is found at 199–236 (PIVPCAPSPCRNGGTCRQSSDVTYDCACLPGFEGQNCE). The EGF-like 6; calcium-binding domain occupies 238 to 274 (NVDDCPGHRCLNGGTCVDGVNTYNCQCPPEWTGQFCT). One can recognise an EGF-like 7 domain in the interval 276–314 (DVDECQLQPNACHNGGTCFNLLGGHSCVCVNGWTGESCS). An EGF-like 8; calcium-binding domain is found at 316 to 352 (NIDDCATAVCFHGATCHDRVASFYCACPMGKTGLLCH). The EGF-like 9 domain occupies 353-391 (LDDACVSNPCHEDAICDTNPVSGRAICTCPPGFTGGACD). Positions 393-431 (DVDECSIGANPCEHLGRCVNTQGSFLCQCGRGYTGPRCE) constitute an EGF-like 10; calcium-binding domain. The 37-residue stretch at 433-469 (DVNECLSGPCRNQATCLDRIGQFTCICMAGFTGTFCE) folds into the EGF-like 11; calcium-binding domain. In terms of domain architecture, EGF-like 12; calcium-binding spans 471–507 (DIDECQSSPCVNGGVCKDRVNGFSCTCPSGFSGSTCQ). The EGF-like 13; calcium-binding domain maps to 509–545 (DVDECASTPCRNGAKCVDQPDGYECRCAEGFEGTLCE). One can recognise an EGF-like 14; calcium-binding domain in the interval 547–582 (NVDDCSPDPCHHGRCVDGIASFSCACAPGYTGIRCE). Residues 584–620 (QVDECRSQPCRYGGKCLDLVDKYLCRCPPGTTGVNCE) enclose the EGF-like 15; calcium-binding domain. Residues 622 to 657 (NIDDCASNPCTFGVCRDGINRYDCVCQPGFTGPLCN) enclose the EGF-like 16; calcium-binding domain. The EGF-like 17; calcium-binding domain maps to 659 to 695 (EINECASSPCGEGGSCVDGENGFHCLCPPGSLPPLCL). 3 consecutive EGF-like domains span residues 697-732 (ANHP…PRCS), 736-772 (APDA…HQCE), and 773-810 (VLSP…PRCQ). The EGF-like 21; calcium-binding domain maps to 812 to 849 (DVDECAGASPCGPHGTCTNLPGSFRCICHGGYTGPFCD). Residues 851-887 (DIDDCDPNPCLNGGSCQDGVGSFSCSCLSGFAGPRCA) enclose the EGF-like 22; calcium-binding domain. An EGF-like 23; calcium-binding domain is found at 889–924 (DVDECLSSPCGPGTCTDHVASFTCTCPPGYGGFHCE). EGF-like domains are found at residues 926–962 (DLLD…THCQ), 964–1000 (KVDP…NQCQ), 1002–1036 (PVDW…PLCD), 1038–1084 (PSLP…SHCE), and 1086–1122 (EVDP…DSCE). An EGF-like 29; calcium-binding domain is found at 1124–1160 (DVDECASQPCQNGGSCIDLVAHYLCSCPPGTLGVLCE). The EGF-like 30; calcium-binding domain occupies 1162 to 1205 (NEDDCGPGPSLDSGLRCLHNGTCVDLVGGFRCNCPPGYTGLHCE). An N-linked (GlcNAc...) asparagine glycan is attached at asparagine 1181. EGF-like domains are found at residues 1207–1246 (DINE…PRCQ), 1248–1289 (ALFP…LRCE), 1291–1327 (VARS…PSCR), and 1337–1375 (TNTS…PRCE). Asparagine 1338 is a glycosylation site (N-linked (GlcNAc...) asparagine). 12 disulfides stabilise this stretch: cysteine 1341-cysteine 1352, cysteine 1346-cysteine 1363, cysteine 1365-cysteine 1374, cysteine 1389-cysteine 1412, cysteine 1394-cysteine 1407, cysteine 1403-cysteine 1419, cysteine 1430-cysteine 1453, cysteine 1435-cysteine 1448, cysteine 1444-cysteine 1460, cysteine 1469-cysteine 1495, cysteine 1477-cysteine 1490, and cysteine 1486-cysteine 1502. 3 LNR repeats span residues 1389-1429 (CPRA…PWRQ), 1430-1467 (CEAL…GRDR), and 1469-1507 (CNPV…SEVP). The N-linked (GlcNAc...) asparagine glycan is linked to asparagine 1440. The helical transmembrane segment at 1646 to 1666 (LPLLVAGAVFLLVIFVLGVMV) threads the bilayer. The Cytoplasmic segment spans residues 1667 to 2319 (ARRKREHSTL…EVTPKRQVMA (653 aa)). ANK repeat units lie at residues 1840 to 1869 (TGET…DTNA), 1873 to 1903 (SGRT…DLDA), 1907 to 1936 (DGST…DVNA), 1940 to 1969 (LGKS…NKDM), and 1973 to 2002 (KEET…NREI). 2 disordered regions span residues 2026–2046 (LDQP…PLLC) and 2059–2129 (QSGT…EGPY). Residues 2029 to 2046 (PSGPRSPSGPHGLGPLLC) are compositionally biased toward low complexity. At arginine 2175 the chain carries Omega-N-methylarginine. The segment at 2197-2319 (LNPATPVSPH…EVTPKRQVMA (123 aa)) is disordered. Residues 2263-2288 (SLSDWSDSTPSPATATSATAAGALPA) are compositionally biased toward low complexity. A compositionally biased stretch (polar residues) spans 2297–2306 (SLPQSQTQLG).

The protein belongs to the NOTCH family. As to quaternary structure, heterodimer of a C-terminal fragment N(TM) and a N-terminal fragment N(EC) which are probably linked by disulfide bonds. Interacts with MAML1, MAML2 and MAML3 which act as transcriptional coactivators for NOTCH3. Interacts with PSMA1. Interacts with HIF1AN. Synthesized in the endoplasmic reticulum as an inactive form which is proteolytically cleaved by a furin-like convertase in the trans-Golgi network before it reaches the plasma membrane to yield an active, ligand-accessible form. Cleavage results in a C-terminal fragment N(TM) and a N-terminal fragment N(EC). Following ligand binding, it is cleaved by TNF-alpha converting enzyme (TACE) to yield a membrane-associated intermediate fragment called notch extracellular truncation (NEXT). This fragment is then cleaved by presenilin dependent gamma-secretase to release a notch-derived peptide containing the intracellular domain (NICD) from the membrane. In terms of processing, phosphorylated. Post-translationally, hydroxylated by HIF1AN. Expressed in postnatal central nervous system (CNS) germinal zones and, in early postnatal life, within numerous cells throughout the CNS. It is more highly localized to ventricular germinal zones.

It localises to the cell membrane. The protein resides in the nucleus. Functionally, functions as a receptor for membrane-bound ligands Jagged1, Jagged2 and Delta1 to regulate cell-fate determination. Upon ligand activation through the released notch intracellular domain (NICD) it forms a transcriptional activator complex with RBPJ/RBPSUH and activates genes of the enhancer of split locus. Affects the implementation of differentiation, proliferation and apoptotic programs. Acts instructively to control the cell fate determination of CNS multipotent progenitor cells, resulting in astroglial induction and neuron/oligodendrocyte suppression. This Rattus norvegicus (Rat) protein is Neurogenic locus notch homolog protein 3 (Notch3).